A 299-amino-acid chain; its full sequence is NAD kinase (299 aa).

Residue D71 is the Proton acceptor of the active site. Residues 71-72 (DG), 145-146 (ND), R173, D175, 186-191 (TAYSLS), A210, and Q248 contribute to the NAD(+) site.

Belongs to the NAD kinase family. The cofactor is a divalent metal cation.

The protein localises to the cytoplasm. It catalyses the reaction NAD(+) + ATP = ADP + NADP(+) + H(+). Functionally, involved in the regulation of the intracellular balance of NAD and NADP, and is a key enzyme in the biosynthesis of NADP. Catalyzes specifically the phosphorylation on 2'-hydroxyl of the adenosine moiety of NAD to yield NADP. The polypeptide is NAD kinase (Bordetella bronchiseptica (strain ATCC BAA-588 / NCTC 13252 / RB50) (Alcaligenes bronchisepticus)).